Here is a 322-residue protein sequence, read N- to C-terminus: ATP-dependent 6-phosphofructokinase (322 aa).

ATP-binding positions include G12, 73 to 74, and 103 to 106; these read RF and GDGT. Residue D104 coordinates Mg(2+). 126 to 128 is a substrate binding site; that stretch reads TID. The active-site Proton acceptor is the D128. Residue R155 coordinates ADP. Substrate contacts are provided by residues R163 and 170–172; that span reads MGR. Residues 186–188, K212, and 214–216 contribute to the ADP site; these read GSE and KPS. Residues E223, R245, and 251 to 254 contribute to the substrate site; that span reads HTQR.

Belongs to the phosphofructokinase type A (PFKA) family. ATP-dependent PFK group I subfamily. Prokaryotic clade 'B1' sub-subfamily. As to quaternary structure, homotetramer. The cofactor is Mg(2+).

It localises to the cytoplasm. It carries out the reaction beta-D-fructose 6-phosphate + ATP = beta-D-fructose 1,6-bisphosphate + ADP + H(+). The protein operates within carbohydrate degradation; glycolysis; D-glyceraldehyde 3-phosphate and glycerone phosphate from D-glucose: step 3/4. Allosterically activated by ADP and other diphosphonucleosides, and allosterically inhibited by phosphoenolpyruvate. Functionally, catalyzes the phosphorylation of D-fructose 6-phosphate to fructose 1,6-bisphosphate by ATP, the first committing step of glycolysis. The polypeptide is ATP-dependent 6-phosphofructokinase (Mesomycoplasma hyopneumoniae (strain J / ATCC 25934 / NCTC 10110) (Mycoplasma hyopneumoniae)).